The sequence spans 286 residues: Lipid phosphate phosphatase epsilon 2, chloroplastic (286 aa).

A chloroplast-targeting transit peptide spans 1–60; that stretch reads MAASSSSLLLLHKPTYNFHFAASSVPTYINSARFRISSSIFPLDRRRRRRIWSVSGFKSM. A run of 5 helical transmembrane segments spans residues 133–149, 173–193, 194–214, 226–246, and 260–280; these read LWAV…SVAL, AQSI…WLGT, NVLS…FTWL, VVVG…TWNS, and IALF…VLLN.

The protein belongs to the PA-phosphatase related phosphoesterase family. Expressed in root tips, root branch points, cotyledons and leaves.

The protein resides in the plastid. Its subcellular location is the chloroplast inner membrane. Inhibited by Mg(2+). In terms of biological role, exhibits phosphatidate phosphatase (PAP) activity in vitro. May play a secondary role as PAP in plastids. In Arabidopsis thaliana (Mouse-ear cress), this protein is Lipid phosphate phosphatase epsilon 2, chloroplastic (LPPE2).